We begin with the raw amino-acid sequence, 374 residues long: Pectate lyase 1 (374 aa).

Residues 1-21 (MDSPCLVALLVFSFVIGSCFS) form the signal peptide. 2 disulfide bridges follow: Cys28/Cys45 and Cys128/Cys147. A glycan (N-linked (GlcNAc...) asparagine) is linked at Asn158. Residue Asp170 coordinates Ca(2+). Asn191 is a glycosylation site (N-linked (GlcNAc...) (complex) asparagine). Residues Asp194 and Asp198 each coordinate Ca(2+). Arg250 is an active-site residue. A glycan (N-linked (GlcNAc...) asparagine) is linked at Asn293. Cys306 and Cys312 are oxidised to a cystine. The N-linked (GlcNAc...) (complex) asparagine glycan is linked to Asn354.

This sequence belongs to the polysaccharide lyase 1 family. Amb a subfamily. Ca(2+) serves as cofactor. Post-translationally, N-glycosylated; contains fucose and xylose.

It carries out the reaction Eliminative cleavage of (1-&gt;4)-alpha-D-galacturonan to give oligosaccharides with 4-deoxy-alpha-D-galact-4-enuronosyl groups at their non-reducing ends.. The protein operates within glycan metabolism; pectin degradation; 2-dehydro-3-deoxy-D-gluconate from pectin: step 2/5. Has pectate lyase activity. The protein is Pectate lyase 1 of Cryptomeria japonica (Japanese cedar).